The chain runs to 209 residues: Ribosomal RNA large subunit methyltransferase E (209 aa).

Gly63, Trp65, Asp83, Asp99, and Asp124 together coordinate S-adenosyl-L-methionine. Lys164 acts as the Proton acceptor in catalysis.

It belongs to the class I-like SAM-binding methyltransferase superfamily. RNA methyltransferase RlmE family.

It localises to the cytoplasm. The catalysed reaction is uridine(2552) in 23S rRNA + S-adenosyl-L-methionine = 2'-O-methyluridine(2552) in 23S rRNA + S-adenosyl-L-homocysteine + H(+). In terms of biological role, specifically methylates the uridine in position 2552 of 23S rRNA at the 2'-O position of the ribose in the fully assembled 50S ribosomal subunit. The chain is Ribosomal RNA large subunit methyltransferase E from Shewanella putrefaciens (strain CN-32 / ATCC BAA-453).